We begin with the raw amino-acid sequence, 188 residues long: Peptidyl-prolyl cis-trans isomerase (188 aa).

The first 20 residues, 1–20 (MLKRVAIVLGGLLISAHALA), serve as a signal peptide directing secretion. Residues 21–181 (NTMVEMKTNL…QPVKIISVQI (161 aa)) enclose the PPIase cyclophilin-type domain.

Belongs to the cyclophilin-type PPIase family.

It localises to the periplasm. The catalysed reaction is [protein]-peptidylproline (omega=180) = [protein]-peptidylproline (omega=0). Functionally, PPIases accelerate the folding of proteins. It catalyzes the cis-trans isomerization of proline imidic peptide bonds in oligopeptides. This protein is not essential for growth. Presumably plays a role in signal transduction. This chain is Peptidyl-prolyl cis-trans isomerase (rotA), found in Acinetobacter baylyi (strain ATCC 33305 / BD413 / ADP1).